The following is a 353-amino-acid chain: B1 bradykinin receptor (353 aa).

Residues 1-40 (MASSWPPLELQSSNQSQLFPQNATACDNAPEAWDLLHRVL) are Extracellular-facing. 2 N-linked (GlcNAc...) asparagine glycosylation sites follow: Asn-14 and Asn-22. The chain crosses the membrane as a helical span at residues 41–64 (PTFIISICFFGLLGNLFVLLVFLL). Over 65–73 (PRRQLNVAE) the chain is Cytoplasmic. Residues 74-98 (IYLANLAASDLVFVLGLPFWAENIW) form a helical membrane-spanning segment. The Extracellular portion of the chain corresponds to 99–111 (NQFNWPFGALLCR). Cys-110 and Cys-189 are oxidised to a cystine. The helical transmembrane segment at 112–133 (VINGVIKANLFISIFLVVAISQ) threads the bilayer. The Cytoplasmic portion of the chain corresponds to 134–155 (DRYRVLVHPMASRRQQRRRQAR). Residues 156-178 (VTCVLIWVVGGLLSIPTFLLRSI) form a helical membrane-spanning segment. Over 179–199 (QAVPDLNITACILLLPHEAWH) the chain is Extracellular. Residue Asn-185 is glycosylated (N-linked (GlcNAc...) asparagine). The chain crosses the membrane as a helical span at residues 200 to 226 (FARIVELNILGFLLPLAAIVFFNYHIL). Residues 227–247 (ASLRTREEVSRTRCGGRKDSK) are Cytoplasmic-facing. Residues 248 to 272 (TTALILTLVVAFLVCWAPYHFFAFL) form a helical membrane-spanning segment. Residues 273–291 (EFLFQVQAVRGCFWEDFID) are Extracellular-facing. A helical transmembrane segment spans residues 292-314 (LGLQLANFFAFTNSSLNPVIYVF). The Cytoplasmic portion of the chain corresponds to 315 to 353 (VGRLFRTKVWELYKQCTPKSLAPISSSHRKEIFQLFWRN). A lipid anchor (S-palmitoyl cysteine) is attached at Cys-330.

The protein belongs to the G-protein coupled receptor 1 family. Bradykinin receptor subfamily. BDKRB1 sub-subfamily.

It localises to the cell membrane. This is a receptor for bradykinin. Could be a factor in chronic pain and inflammation. The protein is B1 bradykinin receptor (BDKRB1) of Homo sapiens (Human).